Here is a 442-residue protein sequence, read N- to C-terminus: Endothelin receptor type B (442 aa).

An N-terminal signal peptide occupies residues methionine 1–glycine 26. Topologically, residues glutamate 27 to lysine 101 are extracellular. Asparagine 59 carries N-linked (GlcNAc...) asparagine glycosylation. A disordered region spans residues alanine 69 to proline 88. The chain crosses the membrane as a helical span at residues tyrosine 102–isoleucine 126. Residues tyrosine 127–asparagine 137 are Cytoplasmic-facing. A helical transmembrane segment spans residues isoleucine 138 to leucine 163. Residues alanine 164–lysine 175 are Extracellular-facing. The cysteines at positions 174 and 255 are disulfide-linked. A helical transmembrane segment spans residues leucine 176 to isoleucine 197. Topologically, residues aspartate 198–threonine 218 are cytoplasmic. The helical transmembrane segment at alanine 219–isoleucine 243 threads the bilayer. The Extracellular portion of the chain corresponds to threonine 244–threonine 271. A helical membrane pass occupies residues alanine 272 to methionine 296. Over threonine 297–threonine 324 the chain is Cytoplasmic. Serine 305 is subject to Phosphoserine. Residues valine 325 to tyrosine 350 traverse the membrane as a helical segment. The Extracellular segment spans residues asparagine 351 to serine 362. Residues phenylalanine 363–valine 389 traverse the membrane as a helical segment. The Cytoplasmic portion of the chain corresponds to serine 390–serine 442. 3 S-palmitoyl cysteine lipidation sites follow: cysteine 402, cysteine 403, and cysteine 405. Serine 419 is modified (phosphoserine). Tyrosine 439 bears the Phosphotyrosine mark. 3 positions are modified to phosphoserine: serine 440, serine 441, and serine 442.

It belongs to the G-protein coupled receptor 1 family. Endothelin receptor subfamily. EDNRB sub-subfamily. Palmitoylation of Cys-402 was confirmed by the palmitoylation of Cys-402 in a deletion mutant lacking both Cys-403 and Cys-405. Expressed in placental stem villi vessels, but not in cultured placental villi smooth muscle cells.

It is found in the cell membrane. Non-specific receptor for endothelin 1, 2, and 3. Mediates its action by association with G proteins that activate a phosphatidylinositol-calcium second messenger system. The chain is Endothelin receptor type B from Homo sapiens (Human).